We begin with the raw amino-acid sequence, 318 residues long: Probable RNA methyltransferase At5g51130 (318 aa).

Disordered regions lie at residues M1–V61 and N146–E184. Residues R16 to V34 are compositionally biased toward basic and acidic residues. Residues Q37–Q52 show a composition bias toward low complexity. Residues D82–K318 form the Bin3-type SAM domain.

It belongs to the methyltransferase superfamily.

Its function is as follows. Probable RNA methyltransferase. This is Probable RNA methyltransferase At5g51130 from Arabidopsis thaliana (Mouse-ear cress).